A 227-amino-acid chain; its full sequence is Ribosomal RNA large subunit methyltransferase E (227 aa).

The S-adenosyl-L-methionine site is built by Gly-78, Trp-80, Asp-103, Asp-119, and Asp-143. Lys-183 acts as the Proton acceptor in catalysis.

This sequence belongs to the class I-like SAM-binding methyltransferase superfamily. RNA methyltransferase RlmE family.

The protein resides in the cytoplasm. It carries out the reaction uridine(2552) in 23S rRNA + S-adenosyl-L-methionine = 2'-O-methyluridine(2552) in 23S rRNA + S-adenosyl-L-homocysteine + H(+). Its function is as follows. Specifically methylates the uridine in position 2552 of 23S rRNA at the 2'-O position of the ribose in the fully assembled 50S ribosomal subunit. In Rickettsia bellii (strain RML369-C), this protein is Ribosomal RNA large subunit methyltransferase E.